The chain runs to 164 residues: Pheromone-binding protein 2 (164 aa).

The signal sequence occupies residues 1-22 (MIRKVLLSVLLAVLMTINLGQA). 3 disulfides stabilise this stretch: C41–C76, C72–C130, and C119–C139.

It belongs to the PBP/GOBP family. In terms of tissue distribution, antenna.

In terms of biological role, this major soluble protein in olfactory sensilla of male moths might serve to solubilize the extremely hydrophobic pheromone molecules and to transport pheromone through the aqueous lymph to receptors located on olfactory cilia. The chain is Pheromone-binding protein 2 from Antheraea pernyi (Chinese oak silk moth).